Reading from the N-terminus, the 427-residue chain is D-inositol 3-phosphate glycosyltransferase (427 aa).

1D-myo-inositol 3-phosphate is bound at residue His12. UDP-N-acetyl-alpha-D-glucosamine-binding positions include Gln18–Pro19 and Gly26. 1D-myo-inositol 3-phosphate-binding positions include Asp23 to Asn28, Lys81, Tyr113, Thr137, and Arg157. Positions 234, 239, and 297 each coordinate UDP-N-acetyl-alpha-D-glucosamine. The Mg(2+) site is built by Tyr306, Gln307, and Ala309. UDP-N-acetyl-alpha-D-glucosamine contacts are provided by Glu319 and Glu327. Thr333 is a Mg(2+) binding site.

Belongs to the glycosyltransferase group 1 family. MshA subfamily. As to quaternary structure, homodimer.

The enzyme catalyses 1D-myo-inositol 3-phosphate + UDP-N-acetyl-alpha-D-glucosamine = 1D-myo-inositol 2-acetamido-2-deoxy-alpha-D-glucopyranoside 3-phosphate + UDP + H(+). Functionally, catalyzes the transfer of a N-acetyl-glucosamine moiety to 1D-myo-inositol 3-phosphate to produce 1D-myo-inositol 2-acetamido-2-deoxy-glucopyranoside 3-phosphate in the mycothiol biosynthesis pathway. This Corynebacterium diphtheriae (strain ATCC 700971 / NCTC 13129 / Biotype gravis) protein is D-inositol 3-phosphate glycosyltransferase.